The following is a 214-amino-acid chain: Thymidylate kinase (214 aa).

Glycine 15–threonine 22 contributes to the ATP binding site.

It belongs to the thymidylate kinase family.

The enzyme catalyses dTMP + ATP = dTDP + ADP. Its function is as follows. Phosphorylation of dTMP to form dTDP in both de novo and salvage pathways of dTTP synthesis. The protein is Thymidylate kinase of Haemophilus ducreyi (strain 35000HP / ATCC 700724).